The following is a 116-amino-acid chain: Small ribosomal subunit protein uS13m (116 aa).

A disordered region spans residues 92–116 (HQDGSPLRGQRTHTNARTARKQIRK).

The protein belongs to the universal ribosomal protein uS13 family. In terms of assembly, part of the small ribosomal subunit.

The protein localises to the mitochondrion. Its function is as follows. Located at the top of the head of the small subunit, it contacts several helices of the 18S rRNA. This Triticum aestivum (Wheat) protein is Small ribosomal subunit protein uS13m (RPS13).